A 167-amino-acid chain; its full sequence is SsrA-binding protein (167 aa).

Positions 139 to 158 (QNHDKRDAAKDRDWQRDKQR) are enriched in basic and acidic residues. The interval 139–167 (QNHDKRDAAKDRDWQRDKQRVMRRHNRDA) is disordered.

This sequence belongs to the SmpB family.

It is found in the cytoplasm. Functionally, required for rescue of stalled ribosomes mediated by trans-translation. Binds to transfer-messenger RNA (tmRNA), required for stable association of tmRNA with ribosomes. tmRNA and SmpB together mimic tRNA shape, replacing the anticodon stem-loop with SmpB. tmRNA is encoded by the ssrA gene; the 2 termini fold to resemble tRNA(Ala) and it encodes a 'tag peptide', a short internal open reading frame. During trans-translation Ala-aminoacylated tmRNA acts like a tRNA, entering the A-site of stalled ribosomes, displacing the stalled mRNA. The ribosome then switches to translate the ORF on the tmRNA; the nascent peptide is terminated with the 'tag peptide' encoded by the tmRNA and targeted for degradation. The ribosome is freed to recommence translation, which seems to be the essential function of trans-translation. The sequence is that of SsrA-binding protein from Xanthomonas euvesicatoria pv. vesicatoria (strain 85-10) (Xanthomonas campestris pv. vesicatoria).